We begin with the raw amino-acid sequence, 377 residues long: Erythronate-4-phosphate dehydrogenase (377 aa).

Substrate-binding residues include S45 and T67. NAD(+) contacts are provided by residues 127-128 (QV), D147, and T176. R209 is an active-site residue. D233 serves as a coordination point for NAD(+). E238 is a catalytic residue. H255 serves as the catalytic Proton donor. G258 serves as a coordination point for NAD(+). Position 259 (Y259) interacts with substrate.

The protein belongs to the D-isomer specific 2-hydroxyacid dehydrogenase family. PdxB subfamily. As to quaternary structure, homodimer.

Its subcellular location is the cytoplasm. The enzyme catalyses 4-phospho-D-erythronate + NAD(+) = (R)-3-hydroxy-2-oxo-4-phosphooxybutanoate + NADH + H(+). It participates in cofactor biosynthesis; pyridoxine 5'-phosphate biosynthesis; pyridoxine 5'-phosphate from D-erythrose 4-phosphate: step 2/5. Its function is as follows. Catalyzes the oxidation of erythronate-4-phosphate to 3-hydroxy-2-oxo-4-phosphonooxybutanoate. This is Erythronate-4-phosphate dehydrogenase from Vibrio vulnificus (strain YJ016).